Reading from the N-terminus, the 438-residue chain is Dol-P-Man:Man(5)GlcNAc(2)-PP-Dol alpha-1,3-mannosyltransferase (438 aa).

Position 13 is a phosphoserine (Ser-13). The next 11 helical transmembrane spans lie at 41–61, 95–115, 123–143, 149–169, 172–192, 203–223, 231–251, 289–309, 332–352, 356–376, and 407–427; these read YTLL…FWVI, TGPL…YYAT, MAQN…FLIY, VPPF…SIFV, LFND…LLAQ, LAVS…FLLL, ALPK…PFLL, FHLA…LCRW, PLTP…GICF, LHYQ…WAMP, and AALH…PQPF.

The protein belongs to the glycosyltransferase ALG3 family.

Its subcellular location is the endoplasmic reticulum membrane. The catalysed reaction is an alpha-D-Man-(1-&gt;2)-alpha-D-Man-(1-&gt;2)-alpha-D-Man-(1-&gt;3)-[alpha-D-Man-(1-&gt;6)]-beta-D-Man-(1-&gt;4)-beta-D-GlcNAc-(1-&gt;4)-alpha-D-GlcNAc-diphospho-di-trans,poly-cis-dolichol + a di-trans,poly-cis-dolichyl beta-D-mannosyl phosphate = an alpha-D-Man-(1-&gt;2)-alpha-D-Man-(1-&gt;2)-alpha-D-Man-(1-&gt;3)-[alpha-D-Man-(1-&gt;3)-alpha-D-Man-(1-&gt;6)]-beta-D-Man-(1-&gt;4)-beta-D-GlcNAc-(1-&gt;4)-alpha-D-GlcNAc-diphospho-di-trans,poly-cis-dolichol + a di-trans,poly-cis-dolichyl phosphate + H(+). It participates in protein modification; protein glycosylation. Functionally, dol-P-Man:Man(5)GlcNAc(2)-PP-Dol alpha-1,3-mannosyltransferase that operates in the biosynthetic pathway of dolichol-linked oligosaccharides, the glycan precursors employed in protein asparagine (N)-glycosylation. The assembly of dolichol-linked oligosaccharides begins on the cytosolic side of the endoplasmic reticulum membrane and finishes in its lumen. The sequential addition of sugars to dolichol pyrophosphate produces dolichol-linked oligosaccharides containing fourteen sugars, including two GlcNAcs, nine mannoses and three glucoses. Once assembled, the oligosaccharide is transferred from the lipid to nascent proteins by oligosaccharyltransferases. In the lumen of the endoplasmic reticulum, adds the first dolichyl beta-D-mannosyl phosphate derived mannose in an alpha-1,3 linkage to Man(5)GlcNAc(2)-PP-dolichol to produce Man(6)GlcNAc(2)-PP-dolichol. Man(6)GlcNAc(2)-PP-dolichol is a substrate for ALG9, the following enzyme in the biosynthetic pathway. This is Dol-P-Man:Man(5)GlcNAc(2)-PP-Dol alpha-1,3-mannosyltransferase from Homo sapiens (Human).